The primary structure comprises 396 residues: Elongation factor Tu (396 aa).

One can recognise a tr-type G domain in the interval 10 to 206 (KPHVNIGTIG…AVDEYIPDPV (197 aa)). The interval 19–26 (GHVDHGKT) is G1. GTP is bound at residue 19–26 (GHVDHGKT). Position 26 (Thr-26) interacts with Mg(2+). Residues 62-66 (GITIN) are G2. Residues 83-86 (DAPG) form a G3 region. GTP-binding positions include 83–87 (DAPGH) and 138–141 (NKSD). The interval 138–141 (NKSD) is G4. A G5 region spans residues 176-178 (SGL).

This sequence belongs to the TRAFAC class translation factor GTPase superfamily. Classic translation factor GTPase family. EF-Tu/EF-1A subfamily. Monomer.

The protein localises to the cytoplasm. The enzyme catalyses GTP + H2O = GDP + phosphate + H(+). GTP hydrolase that promotes the GTP-dependent binding of aminoacyl-tRNA to the A-site of ribosomes during protein biosynthesis. The protein is Elongation factor Tu of Micrococcus luteus (strain ATCC 4698 / DSM 20030 / JCM 1464 / CCM 169 / CCUG 5858 / IAM 1056 / NBRC 3333 / NCIMB 9278 / NCTC 2665 / VKM Ac-2230) (Micrococcus lysodeikticus).